Here is a 274-residue protein sequence, read N- to C-terminus: Cytochrome c oxidase subunit 3 (274 aa).

Topologically, residues 1–15 (MTHQTHAYHMVNPSP) are mitochondrial matrix. A helical transmembrane segment spans residues 16-34 (WPLTGALSALLMTSGLAMW). At 35-40 (FHFNSS) the chain is on the mitochondrial intermembrane side. The chain crosses the membrane as a helical span at residues 41 to 66 (MLLSLGMLTNLLTMYQWWRDIVREGT). Residues 67–72 (FQGHHT) lie on the Mitochondrial matrix side of the membrane. A helical transmembrane segment spans residues 73-105 (SIVQKGLRYGMVLFIISEIFFFAGFFWAFYHSS). The Mitochondrial intermembrane segment spans residues 106 to 128 (LAPTPELGGCWPPTGIHPLNPLE). The chain crosses the membrane as a helical span at residues 129–152 (VPLLNTAVLLASGVSITWAHHSLM). Residues 153 to 155 (EGN) are Mitochondrial matrix-facing. The chain crosses the membrane as a helical span at residues 156–183 (RVQMLQALLITITLGLYFTLLQASEYFE). Over 184 to 190 (TSFTISD) the chain is Mitochondrial intermembrane. Residues 191-223 (GVYGSTFFMATGFHGLHVIIGSTFLTVCFFRQL) form a helical membrane-spanning segment. Residues 224–232 (SFHFTSNHH) are Mitochondrial matrix-facing. A helical membrane pass occupies residues 233–256 (FGFEAAAWYWHFVDVVWLFLYVSI). The Mitochondrial intermembrane portion of the chain corresponds to 257-274 (YWWGSYSFSIDPMQLTSN).

Belongs to the cytochrome c oxidase subunit 3 family. In terms of assembly, component of the cytochrome c oxidase (complex IV, CIV), a multisubunit enzyme composed of 14 subunits. The complex is composed of a catalytic core of 3 subunits MT-CO1, MT-CO2 and MT-CO3, encoded in the mitochondrial DNA, and 11 supernumerary subunits COX4I, COX5A, COX5B, COX6A, COX6B, COX6C, COX7A, COX7B, COX7C, COX8 and NDUFA4, which are encoded in the nuclear genome. The complex exists as a monomer or a dimer and forms supercomplexes (SCs) in the inner mitochondrial membrane with NADH-ubiquinone oxidoreductase (complex I, CI) and ubiquinol-cytochrome c oxidoreductase (cytochrome b-c1 complex, complex III, CIII), resulting in different assemblies (supercomplex SCI(1)III(2)IV(1) and megacomplex MCI(2)III(2)IV(2)).

It localises to the mitochondrion inner membrane. It carries out the reaction 4 Fe(II)-[cytochrome c] + O2 + 8 H(+)(in) = 4 Fe(III)-[cytochrome c] + 2 H2O + 4 H(+)(out). Functionally, component of the cytochrome c oxidase, the last enzyme in the mitochondrial electron transport chain which drives oxidative phosphorylation. The respiratory chain contains 3 multisubunit complexes succinate dehydrogenase (complex II, CII), ubiquinol-cytochrome c oxidoreductase (cytochrome b-c1 complex, complex III, CIII) and cytochrome c oxidase (complex IV, CIV), that cooperate to transfer electrons derived from NADH and succinate to molecular oxygen, creating an electrochemical gradient over the inner membrane that drives transmembrane transport and the ATP synthase. Cytochrome c oxidase is the component of the respiratory chain that catalyzes the reduction of oxygen to water. Electrons originating from reduced cytochrome c in the intermembrane space (IMS) are transferred via the dinuclear copper A center (CU(A)) of subunit 2 and heme A of subunit 1 to the active site in subunit 1, a binuclear center (BNC) formed by heme A3 and copper B (CU(B)). The BNC reduces molecular oxygen to 2 water molecules using 4 electrons from cytochrome c in the IMS and 4 protons from the mitochondrial matrix. The sequence is that of Cytochrome c oxidase subunit 3 (MT-CO3) from Lemur catta (Ring-tailed lemur).